The sequence spans 247 residues: Probable transcriptional regulatory protein LPC_0711 (247 aa).

Belongs to the TACO1 family.

The protein resides in the cytoplasm. The sequence is that of Probable transcriptional regulatory protein LPC_0711 from Legionella pneumophila (strain Corby).